Here is a 52-residue protein sequence, read N- to C-terminus: Insulin (52 aa).

Intrachain disulfides connect Cys-7–Cys-38, Cys-19–Cys-51, and Cys-37–Cys-42.

This sequence belongs to the insulin family. Heterodimer of a B chain and an A chain linked by two disulfide bonds.

It is found in the secreted. Insulin decreases blood glucose concentration. It increases cell permeability to monosaccharides, amino acids and fatty acids. It accelerates glycolysis, the pentose phosphate cycle, and glycogen synthesis in liver. This chain is Insulin (ins), found in Amia calva (Bowfin).